A 158-amino-acid polypeptide reads, in one-letter code: 6,7-dimethyl-8-ribityllumazine synthase (158 aa).

Residues Phe22, 57-59, and 81-83 each bind 5-amino-6-(D-ribitylamino)uracil; these read AVE and AVI. 86-87 provides a ligand contact to (2S)-2-hydroxy-3-oxobutyl phosphate; that stretch reads GT. His89 functions as the Proton donor in the catalytic mechanism. Phe114 is a binding site for 5-amino-6-(D-ribitylamino)uracil. Arg128 provides a ligand contact to (2S)-2-hydroxy-3-oxobutyl phosphate.

The protein belongs to the DMRL synthase family. In terms of assembly, forms an icosahedral capsid composed of 60 subunits, arranged as a dodecamer of pentamers.

It carries out the reaction (2S)-2-hydroxy-3-oxobutyl phosphate + 5-amino-6-(D-ribitylamino)uracil = 6,7-dimethyl-8-(1-D-ribityl)lumazine + phosphate + 2 H2O + H(+). The protein operates within cofactor biosynthesis; riboflavin biosynthesis; riboflavin from 2-hydroxy-3-oxobutyl phosphate and 5-amino-6-(D-ribitylamino)uracil: step 1/2. Functionally, catalyzes the formation of 6,7-dimethyl-8-ribityllumazine by condensation of 5-amino-6-(D-ribitylamino)uracil with 3,4-dihydroxy-2-butanone 4-phosphate. This is the penultimate step in the biosynthesis of riboflavin. The protein is 6,7-dimethyl-8-ribityllumazine synthase of Shewanella putrefaciens (strain CN-32 / ATCC BAA-453).